Reading from the N-terminus, the 200-residue chain is Max dimerization protein 3 (200 aa).

Disordered regions lie at residues 26–56 (EHGYASILPCDPATPGRRKRQRTNSNPDNVR) and 134–164 (LLPPNTERIRTDSLDSSTLSSERSDSDQEDL). Residues 54-106 (NVRSVHNELEKHRRAQLRRCLEQLKQQVPLSMENSRHTTLSLLHRAKQHIKKL) form the bHLH domain.

Efficient DNA binding requires dimerization with another bHLH protein. Binds DNA as a heterodimer with MAX.

The protein resides in the nucleus. In terms of biological role, transcriptional repressor. Binds with MAX to form a sequence-specific DNA-binding protein complex which recognizes the core sequence 5'-CAC[GA]TG-3'. The polypeptide is Max dimerization protein 3 (mxd3) (Xenopus tropicalis (Western clawed frog)).